The chain runs to 224 residues: Large ribosomal subunit protein uL3 (224 aa).

Glutamine 159 carries the N5-methylglutamine modification.

It belongs to the universal ribosomal protein uL3 family. As to quaternary structure, part of the 50S ribosomal subunit. Forms a cluster with proteins L14 and L19. In terms of processing, methylated by PrmB.

Its function is as follows. One of the primary rRNA binding proteins, it binds directly near the 3'-end of the 23S rRNA, where it nucleates assembly of the 50S subunit. This chain is Large ribosomal subunit protein uL3, found in Herminiimonas arsenicoxydans.